A 331-amino-acid chain; its full sequence is Phenylalanine--tRNA ligase alpha subunit (331 aa).

Mg(2+) is bound at residue Glu-258.

It belongs to the class-II aminoacyl-tRNA synthetase family. Phe-tRNA synthetase alpha subunit type 1 subfamily. In terms of assembly, tetramer of two alpha and two beta subunits. Mg(2+) is required as a cofactor.

Its subcellular location is the cytoplasm. It carries out the reaction tRNA(Phe) + L-phenylalanine + ATP = L-phenylalanyl-tRNA(Phe) + AMP + diphosphate + H(+). The chain is Phenylalanine--tRNA ligase alpha subunit (pheS) from Synechocystis sp. (strain ATCC 27184 / PCC 6803 / Kazusa).